Here is a 198-residue protein sequence, read N- to C-terminus: Photosystem I assembly protein Ycf4 (198 aa).

Positions 1 to 20 (MTASTTINKGDSPNGDSSAS) are disordered. A run of 2 helical transmembrane segments spans residues 36-58 (YWWA…SSYL) and 78-100 (LVMG…VILW).

It belongs to the Ycf4 family.

The protein resides in the cellular thylakoid membrane. In terms of biological role, seems to be required for the assembly of the photosystem I complex. This Nostoc sp. (strain PCC 7120 / SAG 25.82 / UTEX 2576) protein is Photosystem I assembly protein Ycf4.